Reading from the N-terminus, the 212-residue chain is MGTEFNGLFDEWAHTYDSFVQGEDIQYKEVFAHYEEILEDVVNKSFGNVLEFGVGTGNLTNKLLLAGRTVYGIEPSREMRAIAKEKLPEGFTITEGDFLKFDVPNTIDTIVSTYAFHHLTDEEKDRAIAKYSQLLNKGGKIVFADTIFVDQEAYDKTVETAKQRGFHQLANDLQTEYYTRIPIMQSIFEKNGFHVTFTRLNHFVWVMEATKQ.

Positions 53, 74, and 97 each coordinate S-adenosyl-L-methionine.

The protein belongs to the methyltransferase superfamily. YrrT family.

Could be a S-adenosyl-L-methionine-dependent methyltransferase. This is an uncharacterized protein from Bacillus cytotoxicus (strain DSM 22905 / CIP 110041 / 391-98 / NVH 391-98).